We begin with the raw amino-acid sequence, 1593 residues long: MNKVYNTVWNESTGMWVVTSELTRKGGRRPRQIRRTALAGLIAGLLLPSAPALAVDYNNETLGSGATSSSMSLNAGDTATDTTINSGGSQRVSSGGSATSTTINSGGFQYVSSGGSATDTTINSGGYQHVSSGGSATDTTINSGGYLSVSGGGTAVDITQNSGGVIDTNTYATLSGTNINGSFSIVNGSASNMLLENGGFLSVLNGHQATNTTINSGGYLSVYGDGSAVDITQNSGGAISTDTSATLSGTNINGSFSIAGGSASNMLLENRGQLNVNSGHQATNTIINSGGNQHISGGGSATDTTINSAGFQYVYSGGSATSTTINRGGNQYVSGGSATNTTINSGGYLSVYGGGTAVDITQNSGGAIDTNTYATLSGTNINGSFSIAGGSASNMLLENGGYLNVNSGHQATNTTINSGGGLRVSGGGTAVDITQNSGGAISADTSATLSGTNINGSFSIANGSASNMLLENGGSLYVNSGHQATNTTINSGGGLRVSGGGTAVDITQNSGGAIDTNTYATLSGTNINGSFSIANGSASNMLLENGGYLYVDGGHQATNTTINSGGILSVSGGGTAVDITQNSGGVIDTNTYATLSGTNINGSFSIANGSASNMLLENGGFLYVNSGHQAMNTTINNSRSTMNVLGGGSATSTTINSGGYQYVSSGGSATSTTINSGGNQYVSSGGSATDTTINSGGSLVVFDGTAVDITQNSGGAITADTSATLSGTNINGSFSIANGSASNMLLERGSLYVEGGHQATNTTINGGGSMDVSTDGSATNTTINDGGQMYVSTDGSVTSTIVNIGGFVNLLGGSATDTTLNEGGRMLVNPQGSATGTIINRGGYQEILRSAGAANTIINGGQQSVLSGGSATDTTLNSGGAQYINNGGSATDTTLNSGGAQYINNGGSVTNTTINSGGGQYVYINGNVTKTTITDGGILQVDAGGSASQVTQNSGGAIVTNTSAVLSGTNDKGTFSIAGGSASNMSLENGGLLTVLVGHDASDTTVGSDGTLSVQSGGVLRGTTTLTDNGTLVGNMVTNEGNLYFLNNSAATFAGTLTGTGTLTQEGGNTRFSGLLSQDGGITLHSGAAMTMVTLQANANVTTQSGTSLTLDNGSILTGNVTGDNTGAGDMTVKGASVWHLDGDATVGALTLDNGTVDFRPSATTRLTQAFRPVSLVSESLSGNGTFRMNTDIASHTGDMLNVTGNANGNFVLDIRNTGLEPVSAGTPLQVVHTGSGDAAFSLNGGKVDAGTWEYYLNKENTDWYLKADSSQPGTDNPGTDNPVPPVRHTTKSADAVLDMATAPVYVFNSELQSLRFRHGDVMQNTRSPGGVWGRYTGSDTRISGGAGSGYSLTQSGMETGGDTVFDLNESRLAVGAFVSYSDNSISHNRGGSSTVGSTGGGLYATWFNNDGYYVDGVIKVNRFRNELRTWMSDGTAVKGDYHQNGFGGSLEAGRTFSLNENTWIQPYLRSTAFRAESKDISLDNGMKAKAGTTKSLQGEVGVNLGMNLDVAGTVVRPYLTTAVSHEFSDNNRVRINDSYNFTNDISGTTGKYGAGVSAQLTANAGVWAEASYQNGENTESPVTGSVGFRINF.

An N-terminal signal peptide occupies residues methionine 1–alanine 54. The span at glycine 65–asparagine 85 shows a compositional bias: polar residues. 2 disordered regions span residues glycine 65–serine 100 and lysine 1267–proline 1286. Residues serine 86–serine 97 show a composition bias toward low complexity. Residues aspartate 1269 to threonine 1280 are compositionally biased toward polar residues. The Autotransporter domain occupies asparagine 1325–phenylalanine 1593.

In terms of processing, glycosylated by heptosyltransferas BAHTCr. Glycosylation is required for adhesion to mammalian cells and colonization of the mouse host gastrointestinal tract.

It is found in the cell outer membrane. Autotransporter required for the colonization of the mouse host gastrointestinal tract, possibly by mediating bacteria adhesion to host cells. The protein is Autotransporter CRAC of Citrobacter rodentium (strain ICC168) (Citrobacter freundii biotype 4280).